Reading from the N-terminus, the 129-residue chain is Follitropin subunit beta (129 aa).

The N-terminal stretch at 1–20 is a signal peptide; that stretch reads MKTVQFCFLFCCWKAICCNS. Disulfide bonds link Cys21-Cys69, Cys35-Cys84, Cys38-Cys122, Cys46-Cys100, Cys50-Cys102, and Cys105-Cys112. N-linked (GlcNAc...) asparagine glycans are attached at residues Asn25 and Asn42.

The protein belongs to the glycoprotein hormones subunit beta family. As to quaternary structure, heterodimer. The active follitropin is a heterodimer composed of an alpha chain/CGA shared with other hormones and a unique beta chain/FSHB shown here.

The protein resides in the secreted. Functionally, together with the alpha chain CGA constitutes follitropin, the follicle-stimulating hormone, and provides its biological specificity to the hormone heterodimer. Binds FSHR, a G protein-coupled receptor, on target cells to activate downstream signaling pathways. Follitropin is involved in follicle development and spermatogenesis in reproductive organs. The chain is Follitropin subunit beta (FSHB) from Aotus nancymaae (Ma's night monkey).